A 568-amino-acid chain; its full sequence is Probable inactive 1-aminocyclopropane-1-carboxylate synthase-like protein 2 (568 aa).

The interval 1–21 is disordered; sequence MSHRSDTLPVPSGQRRGRVPR. Residue Lys395 is modified to N6-(pyridoxal phosphate)lysine.

Belongs to the class-I pyridoxal-phosphate-dependent aminotransferase family.

This Homo sapiens (Human) protein is Probable inactive 1-aminocyclopropane-1-carboxylate synthase-like protein 2 (ACCSL).